The chain runs to 25 residues: Caerin-1.9 (25 aa).

Leucine 25 carries the post-translational modification Leucine amide.

The protein belongs to the frog skin active peptide (FSAP) family. Caerin subfamily. As to expression, expressed by the skin dorsal glands.

It localises to the secreted. Its function is as follows. Antimicrobial peptide. Adopts an alpha helical conformation which can disrupt bacterial membranes. Strongly inhibits the formation of NO by neuronal nitric oxide synthase (nNOS) at micromolar concentrations. Acts by a non-competitive mechanism, probably by binding to calcium/calmodulin and as a consequence blocking calmodulin attachment to nNOS. The chain is Caerin-1.9 from Ranoidea chloris (Red-eyed tree frog).